The sequence spans 409 residues: LLLAGLCCLLPGSLAEDPQGDAAQKTDTPPHDQNHPTLNKITPSLAEFAFSLYRQLAHQSNSTNIFFSPVSIATAFAMLSLGTKADTHSEILEGLNFNLTEIPEAQVHEGFQELLRTLNKPDSQLQLTTGNGLFLNKSLKVVDKFLEDVKNLYHSEAFSVNFEDTEEAKKQINNYVEKGTQGKVVDLVKELDRDTVFALVNYIFFKGKWERPFEVEATEEEDFHVDQATTVKVPMMRRLGMFNIYHCEKLSSWVLLMKYLGNATAIFFLPDEGKLQHLENELTHDIITKFLENENRRSANLHLPKLAITGTYDLKTVLGHLGITKVFSNGADLSGVTEDAPLKLSKAVHKAVLTIDEKGTEAAGAMFLEAIPMSIPPEVKFNKPFVFLMIEQNTKSPLFIGKVVNPTQK.

The first 15 residues, 1 to 15 (LLLAGLCCLLPGSLA), serve as a signal peptide directing secretion. A disordered region spans residues 18-39 (PQGDAAQKTDTPPHDQNHPTLN). N-linked (GlcNAc...) asparagine glycosylation is found at Asn-61, Asn-98, Asn-136, and Asn-262. The RCL stretch occupies residues 364-383 (GAMFLEAIPMSIPPEVKFNK). Position 374 is a phosphoserine (Ser-374).

The protein belongs to the serpin family. As to quaternary structure, interacts with CELA2A. Interacts with ERGIC3 and LMAN1/ERGIC53. Interacts with PRSS1/Trypsin. In terms of tissue distribution, plasma.

The protein resides in the secreted. Inhibitor of serine proteases. Its primary target is elastase, but it also has a moderate affinity for plasmin and thrombin. Inhibits trypsin, chymotrypsin and plasminogen activator. This is Alpha-1-antitrypsin (SERPINA1) from Papio anubis (Olive baboon).